The chain runs to 486 residues: UDP-N-acetylmuramate--L-alanine ligase (486 aa).

123 to 129 (GTHGKTT) provides a ligand contact to ATP.

It belongs to the MurCDEF family.

The protein resides in the cytoplasm. It catalyses the reaction UDP-N-acetyl-alpha-D-muramate + L-alanine + ATP = UDP-N-acetyl-alpha-D-muramoyl-L-alanine + ADP + phosphate + H(+). It participates in cell wall biogenesis; peptidoglycan biosynthesis. Its function is as follows. Cell wall formation. This is UDP-N-acetylmuramate--L-alanine ligase from Pseudomonas savastanoi pv. phaseolicola (strain 1448A / Race 6) (Pseudomonas syringae pv. phaseolicola (strain 1448A / Race 6)).